The sequence spans 599 residues: Elongation factor 4 (599 aa).

The tr-type G domain occupies 2–184; that stretch reads KNIRNFSIIA…RLVRDIPPPQ (183 aa). Residues 14 to 19 and 131 to 134 contribute to the GTP site; these read DHGKST and NKID.

This sequence belongs to the TRAFAC class translation factor GTPase superfamily. Classic translation factor GTPase family. LepA subfamily.

The protein resides in the cell inner membrane. The catalysed reaction is GTP + H2O = GDP + phosphate + H(+). Required for accurate and efficient protein synthesis under certain stress conditions. May act as a fidelity factor of the translation reaction, by catalyzing a one-codon backward translocation of tRNAs on improperly translocated ribosomes. Back-translocation proceeds from a post-translocation (POST) complex to a pre-translocation (PRE) complex, thus giving elongation factor G a second chance to translocate the tRNAs correctly. Binds to ribosomes in a GTP-dependent manner. This chain is Elongation factor 4, found in Salmonella gallinarum (strain 287/91 / NCTC 13346).